The primary structure comprises 242 residues: High mobility group protein homolog (242 aa).

2 consecutive DNA-binding regions (HMG box) follow at residues 54–122 (PKRN…EANK) and 126–197 (KPVK…IDKE).

It localises to the host nucleus. The protein is High mobility group protein homolog (EF1) of Acheta domesticus (House cricket).